The chain runs to 246 residues: Homeobox protein Crxos (246 aa).

2 DNA-binding regions (homeobox) span residues 22–72 (WEQL…EMRP) and 129–182 (ELTD…RGYR). The Nuclear localization signal signature appears at 163–177 (RKDLIRSWFITQRHR).

Belongs to the paired homeobox family. Specifically expressed during the preimplantation stages of embryonic development, between the four-cell to eight-cell stage and the morula stage. Expressed in adult testis. As to expression, detected in early embryos; expression decreases gradually with embryonic development. Also expressed in extraembryonic tissues after E14.5, expression level increases drastically until E18.5, immediately before partum.

It localises to the nucleus. Transcription factor that acts as a regulator of embryonic stem cell differentiation during the preimplantation stages of embryonic development. Its function is as follows. Transcription factor that acts as a positive regulator of embryonic stem cell differentiation. Functionally, transcription factor that promotes embryonic stem cell pluripotency. In terms of biological role, transcription factor that promotes embryonic stem cell pluripotency. Also involved in extraembryonic tissues development by promoting the expression of placental prolactin family genes. In Mus musculus (Mouse), this protein is Homeobox protein Crxos.